The chain runs to 309 residues: Pyridoxal kinase (309 aa).

Thr-2 carries the N-acetylthreonine; in Pyridoxal kinase, N-terminally processed modification. Positions 23 and 58 each coordinate pyridoxal. Thr-58 is a pyridoxal 5'-phosphate binding site. Asp-124 lines the ATP pocket. Asp-124 is a Na(+) binding site. Asp-129 lines the Mg(2+) pocket. Thr-155 lines the Na(+) pocket. ATP-binding positions include 157-160 (NQFE), 193-194 (TS), 225-227 (IPA), and Thr-232. Residue Thr-193 participates in Na(+) binding. 233–234 (GD) serves as a coordination point for pyridoxal 5'-phosphate. Residue Asp-234 is the Proton acceptor of the active site.

This sequence belongs to the pyridoxine kinase family. As to quaternary structure, homodimer. Zn(2+) serves as cofactor. In terms of tissue distribution, expressed ubiquitously in leaves, stems, roots, flowers and siliques. Present in root hairs and other tip-growing cells such as papillar cells on the top of stigma.

It catalyses the reaction pyridoxal + ATP = pyridoxal 5'-phosphate + ADP + H(+). It participates in cofactor metabolism; pyridoxal 5'-phosphate salvage; pyridoxal 5'-phosphate from pyridoxal: step 1/1. Catalyzes the transfer of a phosphate group from ATP to the 5-hydroxylmethyl group of pyridoxal to form the biologically active pyridoxal phosphate, an active form of vitamin B6. Required for Na(+) and K(+) homeostasis and for salt tolerance. Involved in root hair development, both for initiation and tip growth. This chain is Pyridoxal kinase, found in Arabidopsis thaliana (Mouse-ear cress).